The primary structure comprises 55 residues: UPF0434 protein Erum1340/ERWE_CDS_01300 (55 aa).

Belongs to the UPF0434 family.

This chain is UPF0434 protein Erum1340/ERWE_CDS_01300, found in Ehrlichia ruminantium (strain Welgevonden).